A 420-amino-acid polypeptide reads, in one-letter code: Polyketide biosynthesis 3-hydroxy-3-methylglutaryl-ACP synthase PksG (420 aa).

Glu-82 serves as the catalytic Proton donor/acceptor. Residue Cys-114 is the Acyl-thioester intermediate of the active site. Catalysis depends on His-250, which acts as the Proton donor/acceptor.

This sequence belongs to the thiolase-like superfamily. HMG-CoA synthase family.

The protein resides in the cytoplasm. It carries out the reaction 3-oxobutanoyl-[ACP] + acetyl-[ACP] + H2O = (3S)-hydroxy-3-methylglutaryl-[ACP] + holo-[ACP] + H(+). Its pathway is antibiotic biosynthesis; bacillaene biosynthesis. Its function is as follows. Involved in some intermediate steps for the synthesis of the antibiotic polyketide bacillaene which is involved in secondary metabolism. It catalyzes the aldol condensation between the acetyl group attached to the acyl-carrier-protein AcpK (Ac-AcpK) and a beta-ketothioester polyketide intermediate linked to one of the consecutive thiolation domains of PksL. This Bacillus subtilis (strain 168) protein is Polyketide biosynthesis 3-hydroxy-3-methylglutaryl-ACP synthase PksG (pksG).